The primary structure comprises 153 residues: uncharacterized protein (153 aa).

An N-terminal signal peptide occupies residues 1 to 25; it reads MKKRQYLKSLYVALLGTLCYLSVNA.

This is an uncharacterized protein from Pasteurella multocida (strain Pm70).